Consider the following 265-residue polypeptide: MNFLVSILLGIIQGISEWLPISSKTQELIASHYLLGLDVSIAYTFGLFMEMGSIGSALIYFRQDVKRVFHDKFLLKFLVVVTALTGIVGVPLYVISDKLLQNAYNPSIPMIFLGIALIADGIYIRYSRSRTREFKNLSTKEMILIGIAQGIAALPGVSRSGMTVSTMLVLGINPEDAFHYSYLAYIPAAIGSVGTTLLFTRHHISYVVSLIGIDGIALAVISALLTGLVVIGFLLKIAKTKKVYLIDFMLGGIAVLVSMLGLIIS.

A run of 7 helical transmembrane segments spans residues 41–61 (IAYT…LIYF), 75–95 (LKFL…LYVI), 104–124 (YNPS…GIYI), 137–157 (LSTK…LPGV), 180–200 (YSYL…LLFT), 215–235 (GIAL…GFLL), and 244–264 (YLID…GLII).

This sequence belongs to the UppP family.

The protein localises to the cell membrane. The enzyme catalyses di-trans,octa-cis-undecaprenyl diphosphate + H2O = di-trans,octa-cis-undecaprenyl phosphate + phosphate + H(+). Its function is as follows. Catalyzes the dephosphorylation of undecaprenyl diphosphate (UPP). The protein is Undecaprenyl-diphosphatase of Saccharolobus islandicus (strain Y.N.15.51 / Yellowstone #2) (Sulfolobus islandicus).